Here is a 129-residue protein sequence, read N- to C-terminus: uncharacterized protein (129 aa).

The N-terminal stretch at 1-20 is a signal peptide; the sequence is MIYPLFRICILGAFLLGSYA.

This is an uncharacterized protein from Saccharomyces cerevisiae (strain ATCC 204508 / S288c) (Baker's yeast).